The chain runs to 192 residues: Ribosome maturation factor RimP (192 aa).

The protein belongs to the RimP family.

Its subcellular location is the cytoplasm. In terms of biological role, required for maturation of 30S ribosomal subunits. The sequence is that of Ribosome maturation factor RimP from Delftia acidovorans (strain DSM 14801 / SPH-1).